A 254-amino-acid polypeptide reads, in one-letter code: Probable phosphatase TTE1963 (254 aa).

Histidine 14, histidine 16, histidine 22, histidine 47, glutamate 80, histidine 108, histidine 139, aspartate 200, and histidine 202 together coordinate Zn(2+).

It belongs to the PHP family. It depends on Zn(2+) as a cofactor.

The chain is Probable phosphatase TTE1963 from Caldanaerobacter subterraneus subsp. tengcongensis (strain DSM 15242 / JCM 11007 / NBRC 100824 / MB4) (Thermoanaerobacter tengcongensis).